Consider the following 202-residue polypeptide: Imidazoleglycerol-phosphate dehydratase (202 aa).

The protein belongs to the imidazoleglycerol-phosphate dehydratase family. Homotrimer.

The catalysed reaction is D-erythro-1-(imidazol-4-yl)glycerol 3-phosphate = 3-(imidazol-4-yl)-2-oxopropyl phosphate + H2O. It functions in the pathway amino-acid biosynthesis; L-histidine biosynthesis; L-histidine from 5-phospho-alpha-D-ribose 1-diphosphate: step 6/9. The sequence is that of Imidazoleglycerol-phosphate dehydratase (HIS3) from Cryptococcus neoformans var. neoformans serotype D (strain B-3501A) (Filobasidiella neoformans).